Reading from the N-terminus, the 130-residue chain is Cholecystokinin (130 aa).

The first 20 residues, 1 to 20, serve as a signal peptide directing secretion; sequence MYIGICICVLLAALSASSTG. Residues 21 to 60 constitute a propeptide that is removed on maturation; it reads QQTVGSMNEDPGAREIEQQNILQHPRHIRASSSAQLKPFQ. Y112 carries the post-translational modification Sulfotyrosine. F118 carries the post-translational modification Phenylalanine amide. The propeptide occupies 122-130; sequence SAEEYEYSS. 2 positions are modified to sulfotyrosine: Y126 and Y128.

The protein belongs to the gastrin/cholecystokinin family. The precursor is cleaved by proteases to produce a number of active cholecystokinins. In terms of tissue distribution, expressed in brain, lung, testis and throughout the length of the small intestine. In the brain, expressed predominantly in the optic tectum and brain stem.

It localises to the secreted. In terms of biological role, this peptide hormone induces gall bladder contraction and the release of pancreatic enzymes in the gut. Its function in the brain is not clear. This chain is Cholecystokinin (CCK), found in Aquarana catesbeiana (American bullfrog).